The primary structure comprises 540 residues: Putative serine protease F56F10.1 (540 aa).

Positions Met-1 to Ala-16 are cleaved as a signal peptide. Residues Asn-58 and Asn-87 are each glycosylated (N-linked (GlcNAc...) asparagine). Ser-182 acts as the Charge relay system in catalysis. Residues Asn-270, Asn-300, Asn-317, Asn-343, Asn-441, and Asn-449 are each glycosylated (N-linked (GlcNAc...) asparagine). The Charge relay system role is filled by Asp-453. N-linked (GlcNAc...) asparagine glycosylation occurs at Asn-475. The active-site Charge relay system is the His-479.

This sequence belongs to the peptidase S28 family.

The sequence is that of Putative serine protease F56F10.1 from Caenorhabditis elegans.